Here is a 249-residue protein sequence, read N- to C-terminus: Benzil reductase ((S)-benzoin forming) (249 aa).

NADP(+)-binding residues include Ile-6, Asn-87, Tyr-154, Lys-158, Val-189, and Thr-191. The Proton acceptor role is filled by Tyr-154.

Belongs to the short-chain dehydrogenases/reductases (SDR) family.

The protein localises to the cytoplasm. It catalyses the reaction (S)-benzoin + NADP(+) = benzil + NADPH + H(+). It carries out the reaction 2-hydroxy-1-phenyl-1-propanone + NADP(+) = 1-phenyl-1,2-propanedione + NADPH + H(+). Inhibited by Cibacron blue 3GA, a general SDR family inhibitor. Its function is as follows. Reduces benzil stereospecifically to (S)-benzoin. Can also reduce 1-phenyl-1,2-propanedione, 1,4-naphthoquinone, 1-(4-methyl-phenyl)-2-phenyl-ethane-1,2-dione, 1-(4-fluoro-phenyl)-2-phenyl-ethane-1,2-dione, methyl benzoylformate and p-nitrobenzaldehyde in decreasing order. The polypeptide is Benzil reductase ((S)-benzoin forming) (Bacillus cereus).